Consider the following 450-residue polypeptide: Saccharopine dehydrogenase [NADP(+), L-glutamate-forming] (450 aa).

Residues 11-14 (SGFV), 33-35 (CRT), 55-56 (DV), I76, 98-99 (TS), 125-127 (LDP), and S175 each bind NADP(+). Residues 99–100 (SY) and D126 contribute to the L-saccharopine site. L-saccharopine-binding positions include R224 and 245-247 (TLR).

Belongs to the saccharopine dehydrogenase family. Homodimer.

The enzyme catalyses L-saccharopine + NADP(+) + H2O = (S)-2-amino-6-oxohexanoate + L-glutamate + NADPH + H(+). It functions in the pathway amino-acid biosynthesis; L-lysine biosynthesis via AAA pathway; L-lysine from L-alpha-aminoadipate (fungal route): step 2/3. This Pyricularia oryzae (strain 70-15 / ATCC MYA-4617 / FGSC 8958) (Rice blast fungus) protein is Saccharopine dehydrogenase [NADP(+), L-glutamate-forming] (LYS3).